The primary structure comprises 199 residues: MAAKRRVSAAKDKWKLKQWYVIYAPDFFGGVEVGLTPADDPEKVLNRVVEVTLKDITGDFLKGHVKLYFQVYDVKGQNAYTKFKGMKLARSYIRSLVRRRTTRIDGIFNITTKDGYKLRVMAMVIAARRIQTSQERAIRKIMQEIIYKKAEELNFKDFVLEAVNGKIAAEIAKEAKKIYPLKKAEIRKIKVLGEPEVAA.

The protein belongs to the eukaryotic ribosomal protein eS1 family.

The protein is Small ribosomal subunit protein eS1 of Pyrococcus abyssi (strain GE5 / Orsay).